Reading from the N-terminus, the 764-residue chain is Complement factor B (764 aa).

The signal sequence occupies residues 1–25 (MGSNLSPQLCLMPFILGLLSGGVTT). 3 consecutive Sushi domains span residues 35–100 (ESCS…ECRA), 101–160 (IHCP…ICDN), and 163–220 (GYCS…SCQD). 6 disulfide bridges follow: Cys-37–Cys-76, Cys-62–Cys-98, Cys-103–Cys-145, Cys-131–Cys-158, Cys-165–Cys-205, and Cys-191–Cys-218. N-linked (GlcNAc...) asparagine glycans are attached at residues Asn-122 and Asn-142. The region spanning 270–469 (NIYLVLDGSD…NLEDVFYQMI (200 aa)) is the VWFA domain. The Mg(2+) site is built by Ser-278 and Ser-280. N-linked (GlcNAc...) asparagine glycosylation is present at Asn-285. Thr-353 contacts Mg(2+). An N-linked (GlcNAc...) asparagine glycan is attached at Asn-378. The 281-residue stretch at 477-757 (LCGMVWEHRK…VLPWLKEKLQ (281 aa)) folds into the Peptidase S1 domain. 5 disulfides stabilise this stretch: Cys-478/Cys-596, Cys-511/Cys-527, Cys-599/Cys-615, Cys-656/Cys-682, and Cys-695/Cys-725. Catalysis depends on charge relay system residues His-526 and Asp-576. Ser-699 functions as the Charge relay system in the catalytic mechanism.

It belongs to the peptidase S1 family. As to quaternary structure, monomer. Interacts with complement C3b; this interaction is dependent on the presence of Mg(2+). Catalytic component of the C3 convertase of the alternative complement pathway, also named C3bBb, composed of complement factor B Bb and complement C3b. Catalytic component of the C5 convertase of the alternative complement pathway, also named C3bBb3b, composed of complement factor B Bb and additional molecules of complement C3b. Interacts to CFP; this interaction contributes to the stabilization of the active C3-convertase enzyme complex. Requires Mg(2+) as cofactor. Mn(2+) serves as cofactor. Post-translationally, cleaved by CFD following activation of the alternative complement system, generating Ba and Bb chains. Cleavage and activation takes place when CFB is already associated with complement C3b.

It localises to the secreted. The protein localises to the cell surface. The enzyme catalyses Cleavage of Arg-|-Ser bond in complement component C3 alpha-chain to yield C3a and C3b, and Arg-|-Xaa bond in complement component C5 alpha-chain to yield C5a and C5b.. Functionally, precursor of the catalytic component of the C3 and C5 convertase complexes of the alternative pathway of the complement system, a cascade of proteins that leads to phagocytosis and breakdown of pathogens and signaling that strengthens the adaptive immune system. The alternative complement pathway acts as an amplification loop that enhances other complement pathways (classical, lectin and GZMK) by promoting formation of additional C3 and C5 convertases. CFB is cleaved and activated by CFD to generate Ba and Bb chains; Bb chain constituting the catalytic component of the C3 and C5 convertases. Serine protease component of the complement C3 and C5 convertase complexes of the alternative complement pathway. Following cleavage and activation by factor D (CFD), forms the C3 convertase together with complement C3b. As part of the C3 convertase, cleaves and activates C3 into C3a anaphylatoxin and C3b opsonin, the next components of the complement pathways. When an additional complement C3b molecule binds to the C3 convertase, forms the C5 convertase, which cleaves and activates C5 into C5a anaphylatoxin and C5b component of the membrane attack complex. In terms of biological role, involved in proliferation and differentiation of preactivated B-lymphocytes, rapid spreading of peripheral blood monocytes, stimulation of lymphocyte blastogenesis and lysis of erythrocytes. The protein is Complement factor B (CFB) of Pan troglodytes (Chimpanzee).